A 40-amino-acid polypeptide reads, in one-letter code: Fibrinolytic protease (40 aa).

Residues 1-40 (IVGGNEVTPHAYPWQVGLFIDDMYFCGGSISVTLTGWGKP) form the Peptidase S1 domain.

Belongs to the peptidase S1 family.

It localises to the secreted. The protein localises to the extracellular space. Functionally, serine protease with fibrinolytic activity. This is Fibrinolytic protease from Euphausia superba (Antarctic krill).